A 351-amino-acid chain; its full sequence is Foldase protein PrsA 1 (351 aa).

Residues Met1 to Ala22 form the signal peptide. A lipid anchor (N-palmitoyl cysteine) is attached at Cys23. A lipid anchor (S-diacylglycerol cysteine) is attached at Cys23. Residues Thr145 to Lys240 enclose the PpiC domain. Composition is skewed to low complexity over residues Lys303–Ser317 and Glu326–Gln351. Residues Lys303 to Gln351 form a disordered region.

It belongs to the PrsA family.

It localises to the cell membrane. The enzyme catalyses [protein]-peptidylproline (omega=180) = [protein]-peptidylproline (omega=0). Functionally, plays a major role in protein secretion by helping the post-translocational extracellular folding of several secreted proteins. This Streptococcus pyogenes serotype M1 protein is Foldase protein PrsA 1 (prsA1).